Consider the following 477-residue polypeptide: Charged multivesicular body protein 7 (477 aa).

Coiled coils occupy residues 252 to 280 (KLQT…TIKE) and 382 to 428 (ESLS…QQQQ). 2 stretches are compositionally biased toward basic and acidic residues: residues 411 to 424 (EEKQ…KEKQ) and 465 to 477 (KQDE…SELI). The disordered stretch occupies residues 411–477 (EEKQKQKQIE…ENKQKTSELI (67 aa)).

Belongs to the SNF7 family.

The protein localises to the cytoplasm. In terms of biological role, plays a role in the endosomal sorting pathway. This chain is Charged multivesicular body protein 7 (chmp7), found in Dictyostelium discoideum (Social amoeba).